A 414-amino-acid chain; its full sequence is Aspartic protease-like protein pynH (414 aa).

The signal sequence occupies residues 1–19 (MFPCSRIWSLLVAAATASA). The 368-residue stretch at 43–410 (FLTDIALGTP…DFEKLQVGIA (368 aa)) folds into the Peptidase A1 domain. Asn-93, Asn-102, Asn-140, Asn-151, Asn-173, Asn-202, Asn-221, Asn-258, Asn-272, Asn-335, and Asn-366 each carry an N-linked (GlcNAc...) asparagine glycan. An intrachain disulfide couples Cys-333 to Cys-371.

It belongs to the peptidase A1 family.

It functions in the pathway secondary metabolite biosynthesis. In terms of biological role, aspartic protease-like protein; part of the gene cluster that mediates the biosynthesis of pyranonigrins, a family of antioxidative compounds. The first step of pyranonigrins biosynthesis is performed by the hybrid PKS-NRPS synthetase that condenses 6 malonyl-CoA units to an acetyl starter unit, to form a 1,3,5-trioxotetradecane-6,8-dienyl-ACP. The enoyl reductase (ER) domain of pynA is likely to be functional during the first two rounds of polyketide chain extension, to generate the saturated C-C bonds of the alkyl side chain. PynA subsequently forms the amide bond between the acyl chain and L-serine. Although pynA has a terminal reductase domain, it appears to require the thioesterase pynI for the release of the straight-chain intermediate from pynA via the formation of a tetramic acid pyranonigrin J. The methyltransferase pynC then coverts pyranonigrin J to pyranonigrin I via N-methylation. The FAD-dependent monooxygenase pynG catalyzes an epoxidation-mediated cyclization to form the dihydro-gamma-pyrone moiety, followed by pynD-catalyzed oxidation of the alcohol to the ketone and enolization to yield the characteristic tetramic acid-fused gamma-pyrone core of pyranonigrin H. Pyranonigrin H is substrate of pynH for dehydration-mediated exo-methylene formation from the serine side chain to produce pyranonigrin E, before the oxidase pynE reduces the exo-methylene of pyranonigrin E into a pendant methyl to form pyranonigrin G. The FAD-linked oxidoreductase pynB performs the reverse reaction and converts pyranonigrin G back to pyranonigrin E. The sequence is that of Aspartic protease-like protein pynH from Aspergillus niger (strain ATCC MYA-4892 / CBS 513.88 / FGSC A1513).